The primary structure comprises 354 residues: S-adenosylmethionine:tRNA ribosyltransferase-isomerase (354 aa).

It belongs to the QueA family. Monomer.

It is found in the cytoplasm. It catalyses the reaction 7-aminomethyl-7-carbaguanosine(34) in tRNA + S-adenosyl-L-methionine = epoxyqueuosine(34) in tRNA + adenine + L-methionine + 2 H(+). Its pathway is tRNA modification; tRNA-queuosine biosynthesis. In terms of biological role, transfers and isomerizes the ribose moiety from AdoMet to the 7-aminomethyl group of 7-deazaguanine (preQ1-tRNA) to give epoxyqueuosine (oQ-tRNA). This chain is S-adenosylmethionine:tRNA ribosyltransferase-isomerase, found in Salmonella typhi.